The following is a 131-amino-acid chain: MTVTDPIADMLVRIKNASMRRHPTVDVPYSKMKEKILEILLREGYIARYEVIGEIPQKYIRVYLKYKGKTPVIQDVKRVSKPGRRYYVNKEEIPRVLGGLGIAILSTSKGIMTDKEARLLGVGGELICMVW.

It belongs to the universal ribosomal protein uS8 family. In terms of assembly, part of the 30S ribosomal subunit. Contacts proteins S5 and S12.

Functionally, one of the primary rRNA binding proteins, it binds directly to 16S rRNA central domain where it helps coordinate assembly of the platform of the 30S subunit. The polypeptide is Small ribosomal subunit protein uS8 (Dictyoglomus thermophilum (strain ATCC 35947 / DSM 3960 / H-6-12)).